Reading from the N-terminus, the 615-residue chain is Vitamin B12 transporter BtuB (615 aa).

The N-terminal stretch at 1-20 is a signal peptide; that stretch reads MIKKISLLTALSVTAFSGWA. The short motif at 26 to 33 is the TonB box element; it reads NAMVVTAN. Residues 38–152 enclose the TBDR plug domain; sequence PVNSVLAPTT…IGGVVNIITT (115 aa). Residues Ser-85, Asn-92, and 110 to 111 each bind cyanocob(III)alamin; that span reads IS. In terms of domain architecture, TBDR beta-barrel spans 155 to 615; sequence KNGTTLNAGV…EYYLTGSYTF (461 aa). The next 3 membrane-spanning stretches (beta stranded) occupy residues 158–165, 169–178, and 184–195; these read TTLNAGVG, YQSYDAATQQ, and TTATLAGNYVYT. The Ca(2+) site is built by Asp-199, Gln-210, Asp-212, and Asp-214. Transmembrane regions (beta stranded) follow at residues 216–226 and 231–247; these read FMSKSLYGTVE and DQFS…NRTD. Positions 248, 249, and 255 each coordinate Ca(2+). The next 14 beta stranded transmembrane spans lie at 257 to 271, 273 to 290, 303 to 319, 322 to 331, 347 to 363, 365 to 375, 379 to 394, 397 to 411, 429 to 438, 444 to 453, 468 to 486, 490 to 505, 513 to 525, and 531 to 546; these read RQLY…LRYQ, GIYS…KDYD, TLVD…NVLQ, AGTVSAGVDW, ESQN…QRFA, IVLEGSVRGDD, FGWH…WEFI, YSLI…KAPN, ESKQWESGVE, VIWRVSGYRN, VYEN…TASF, PVGH…SRNA, RRAK…QLDW, and DWSV…YDKD. Thr-303 is a cyanocob(III)alamin binding site. A cyanocob(III)alamin-binding site is contributed by Arg-513. Position 547 (Tyr-547) interacts with cyanocob(III)alamin. A run of 3 beta stranded transmembrane segments spans residues 559–573, 586–597, and 603–615; these read TVKL…LAAS, IANLFDKDYETA, and AGRE…SYTF. The TonB C-terminal box motif lies at 598-615; sequence YGYRTAGREYYLTGSYTF.

This sequence belongs to the TonB-dependent receptor family. BtuB (TC 1.B.14.3.1) subfamily.

The protein localises to the cell outer membrane. Its function is as follows. Involved in the active translocation of vitamin B12 (cyanocobalamin) across the outer membrane to the periplasmic space. It derives its energy for transport by interacting with the trans-periplasmic membrane protein TonB. This chain is Vitamin B12 transporter BtuB, found in Pectobacterium atrosepticum (strain SCRI 1043 / ATCC BAA-672) (Erwinia carotovora subsp. atroseptica).